The following is a 264-amino-acid chain: Thymidylate synthase (264 aa).

Arg21 contacts dUMP. His51 serves as a coordination point for (6R)-5,10-methylene-5,6,7,8-tetrahydrofolate. Residue 126–127 coordinates dUMP; it reads RR. The active-site Nucleophile is the Cys146. Residues 166–169, Asn177, and 207–209 contribute to the dUMP site; these read RSVD and HLY. Residue Asp169 coordinates (6R)-5,10-methylene-5,6,7,8-tetrahydrofolate. Ala263 provides a ligand contact to (6R)-5,10-methylene-5,6,7,8-tetrahydrofolate.

The protein belongs to the thymidylate synthase family. Bacterial-type ThyA subfamily. In terms of assembly, homodimer.

The protein localises to the cytoplasm. It carries out the reaction dUMP + (6R)-5,10-methylene-5,6,7,8-tetrahydrofolate = 7,8-dihydrofolate + dTMP. It participates in pyrimidine metabolism; dTTP biosynthesis. In terms of biological role, catalyzes the reductive methylation of 2'-deoxyuridine-5'-monophosphate (dUMP) to 2'-deoxythymidine-5'-monophosphate (dTMP) while utilizing 5,10-methylenetetrahydrofolate (mTHF) as the methyl donor and reductant in the reaction, yielding dihydrofolate (DHF) as a by-product. This enzymatic reaction provides an intracellular de novo source of dTMP, an essential precursor for DNA biosynthesis. The chain is Thymidylate synthase from Geobacillus kaustophilus (strain HTA426).